The following is a 123-amino-acid chain: Small ribosomal subunit protein uS12 (123 aa).

Residues 1–29 (MPTINQLVRKGREPQKAKSKVPAMEQNPQ) are disordered. Asp-89 is subject to 3-methylthioaspartic acid.

It belongs to the universal ribosomal protein uS12 family. Part of the 30S ribosomal subunit. Contacts proteins S8 and S17. May interact with IF1 in the 30S initiation complex.

Its function is as follows. With S4 and S5 plays an important role in translational accuracy. Interacts with and stabilizes bases of the 16S rRNA that are involved in tRNA selection in the A site and with the mRNA backbone. Located at the interface of the 30S and 50S subunits, it traverses the body of the 30S subunit contacting proteins on the other side and probably holding the rRNA structure together. The combined cluster of proteins S8, S12 and S17 appears to hold together the shoulder and platform of the 30S subunit. The polypeptide is Small ribosomal subunit protein uS12 (Novosphingobium aromaticivorans (strain ATCC 700278 / DSM 12444 / CCUG 56034 / CIP 105152 / NBRC 16084 / F199)).